Consider the following 522-residue polypeptide: DNA damage-binding protein CMR1 (522 aa).

The tract at residues 38 to 100 (AGVLEKSRAP…DNQLLKMGSP (63 aa)) is disordered. Residues 54 to 63 (TTNTRATKSA) show a composition bias toward polar residues. Residue S64 is modified to Phosphoserine. A Phosphothreonine modification is found at T69. Basic and acidic residues predominate over residues 75 to 84 (LRGESADDVK). 7 WD repeats span residues 183–224 (ITYE…LADS), 239–281 (LFTK…EVLT), 287–327 (DDSL…SEYN), 331–371 (LADK…KKPE), 388–427 (DSRL…HLSA), 442–481 (GRWT…LAHL), and 482–521 (PTAT…IKQE). Position 224 is a phosphoserine (S224).

The protein belongs to the WD repeat DDB2/WDR76 family.

It localises to the cytoplasm. The protein resides in the nucleus. In terms of biological role, DNA-binding protein that binds to both single- and double-stranded DNA. Binds preferentially to UV-damaged DNA in vitro. May be involved in DNA-metabolic processes. This chain is DNA damage-binding protein CMR1, found in Saccharomyces cerevisiae (strain ATCC 204508 / S288c) (Baker's yeast).